The primary structure comprises 272 residues: Phosphate import ATP-binding protein PstB (272 aa).

The ABC transporter domain occupies 26–267; that stretch reads LEIRNLDLSY…PRKRKTEDYI (242 aa). Position 58–65 (58–65) interacts with ATP; sequence GPSGCGKS.

This sequence belongs to the ABC transporter superfamily. Phosphate importer (TC 3.A.1.7) family. In terms of assembly, the complex is composed of two ATP-binding proteins (PstB), two transmembrane proteins (PstC and PstA) and a solute-binding protein (PstS).

It localises to the cell inner membrane. The catalysed reaction is phosphate(out) + ATP + H2O = ADP + 2 phosphate(in) + H(+). In terms of biological role, part of the ABC transporter complex PstSACB involved in phosphate import. Responsible for energy coupling to the transport system. The protein is Phosphate import ATP-binding protein PstB of Shewanella denitrificans (strain OS217 / ATCC BAA-1090 / DSM 15013).